Consider the following 758-residue polypeptide: Microtubule-associated protein tau (758 aa).

Over residues 1 to 26 the composition is skewed to basic and acidic residues; sequence MAEPRQEFEVMEDHAGTYGLGDRKDQ. The disordered stretch occupies residues 1-573; that stretch reads MAEPRQEFEV…PVPMPDLKNV (573 aa). Alanine 2 carries the post-translational modification N-acetylalanine. Phosphotyrosine; by FYN is present on tyrosine 18. Tyrosine 29 bears the Phosphotyrosine mark. Lysine 44 participates in a covalent cross-link: Glycyl lysine isopeptide (Lys-Gly) (interchain with G-Cter in ubiquitin). Residues serine 46 and serine 61 each carry the phosphoserine modification. A compositionally biased stretch (polar residues) spans 61–71; it reads SETSDAKSTPT. Threonine 69 and threonine 71 each carry phosphothreonine. A glycan (N-linked (Glc) (glycation) lysine; in PHF-tau; in vitro) is linked at lysine 87. Threonine 111 bears the Phosphothreonine mark. Composition is skewed to basic and acidic residues over residues 179 to 189 and 207 to 216; these read EGGRHAPELLK and GGKERPGSKE. Serine 214 is modified (phosphoserine; by SGK1). The span at 217–228 shows a compositional bias: acidic residues; the sequence is EVDEDRDVDESS. A compositionally biased stretch (basic and acidic residues) spans 314 to 323; that stretch reads EQAHSEEHLG. Positions 324 to 340 are enriched in low complexity; sequence RAAFPGAPGEGPEARGP. Basic and acidic residues-rich tracts occupy residues 344 to 356 and 381 to 393; these read EDTK…EPSE and KSKD…DKKA. Lysine 383 carries N-linked (Glc) (glycation) lysine; in PHF-tau; in vitro glycosylation. The span at 442–453 shows a compositional bias: low complexity; it reads VSSVTSRTGSSG. Residues 455 to 466 are compositionally biased toward basic and acidic residues; it reads KEMKLKGADGKT. N-linked (Glc) (glycation) lysine; in PHF-tau; in vitro glycosylation is present at lysine 467. Residue threonine 470 is modified to Phosphothreonine; by PDPK1. Arginine 472 bears the Omega-N-methylarginine mark. Lysine 480 is a glycosylation site (N-linked (Glc) (glycation) lysine; in PHF-tau; in vitro). Lysine 480 carries the post-translational modification N6,N6-dimethyllysine; alternate. Lysine 480 bears the N6-acetyllysine; alternate mark. Asparagine 484 carries the post-translational modification Deamidated asparagine; in tau and PHF-tau; partial. The residue at position 486 (threonine 486) is a Phosphothreonine. A glycan (N-linked (Glc) (glycation) lysine; in PHF-tau; in vitro) is linked at lysine 491. Residues 491 to 503 are compositionally biased toward pro residues; that stretch reads KTPPAPKTPPSSG. Phosphothreonine is present on threonine 492. Phosphothreonine; by PDPK1 is present on threonine 498. 3 positions are modified to phosphoserine: serine 502, serine 508, and serine 512. Over residues 504 to 531 the composition is skewed to low complexity; it reads EPPKSGDRSGYSSPGSPGTPGSRSRTPS. At tyrosine 514 the chain carries Phosphotyrosine; by TTBK1. Serine 515 and serine 516 each carry phosphoserine; by PDPK1 and TTBK1. Serine 519 carries the phosphoserine; by CK1, PDPK1 and TTBK1 modification. At threonine 522 the chain carries Phosphothreonine; by CK1 and PDPK1. An O-linked (GlcNAc) serine glycan is attached at serine 525. Threonine 529 carries the phosphothreonine; by BRSK1, BRSK2, DYRK2 and PDPK1 modification. Serine 531 is subject to Phosphoserine; by PKA. Position 534 is a phosphothreonine; by PDPK1 (threonine 534). N-linked (Glc) (glycation) lysine; in PHF-tau; in vitro glycosylation occurs at lysine 542. The residue at position 542 (lysine 542) is an N6-acetyllysine. Position 548 is a phosphothreonine; by GSK3-beta and PDPK1 (threonine 548). Lysine 551 carries N-linked (Glc) (glycation) lysine; in PHF-tau; in vitro glycosylation. Serine 552 is subject to Phosphoserine; by PDPK1. The residue at position 554 (serine 554) is a Phosphoserine; by PHK. Serine 555 carries an O-linked (GlcNAc) serine glycan. Tau/MAP repeat units follow at residues 561–591, 592–622, 623–653, and 654–685; these read QTAP…GGGK, VQII…GGGS, VQIV…GGGQ, and VEVK…GGGN. The microtubule-binding domain stretch occupies residues 561–685; it reads QTAPVPMPDL…NITHVPGGGN (125 aa). Lysine 571 is covalently cross-linked (Glycyl lysine isopeptide (Lys-Gly) (interchain with G-Cter in ubiquitin); in PHF-tau). N-linked (Glc) (glycation) lysine; in PHF-tau; in vitro glycosylation occurs at lysine 576. Lysine 576 carries the post-translational modification N6-acetyllysine; alternate. Lysine 576 is modified (N6-methyllysine; alternate). Residue lysine 576 forms a Glycyl lysine isopeptide (Lys-Gly) (interchain with G-Cter in ubiquitin); alternate linkage. Residue serine 579 is modified to Phosphoserine; by MARK1, MARK2, MARK3, MARK4, BRSK1, BRSK2 and PHK. Lysine 584 is covalently cross-linked (Glycyl lysine isopeptide (Lys-Gly) (interchain with G-Cter in ubiquitin)). Position 596 is a deamidated asparagine; in tau and PHF-tau; partial (asparagine 596). Residues lysine 597 and lysine 598 are each glycosylated (N-linked (Glc) (glycation) lysine; in PHF-tau; in vitro). Lysine 598 bears the N6-acetyllysine; alternate mark. Lysine 598 participates in a covalent cross-link: Glycyl lysine isopeptide (Lys-Gly) (interchain with G-Cter in ubiquitin); alternate. Residue serine 602 is modified to Phosphoserine; by PHK. The residue at position 607 (lysine 607) is an N6-acetyllysine. Cysteine 608 and cysteine 639 are disulfide-bonded. Serine 610 is modified (phosphoserine). N6-acetyllysine; alternate is present on lysine 615. A Glycyl lysine isopeptide (Lys-Gly) (interchain with G-Cter in ubiquitin); alternate cross-link involves residue lysine 615. Serine 622 carries the post-translational modification Phosphoserine; by PHK. Residue lysine 628 is modified to N6,N6-dimethyllysine; alternate. 3 positions are modified to N6-acetyllysine; alternate: lysine 628, lysine 634, and lysine 638. Lysine 628 participates in a covalent cross-link: Glycyl lysine isopeptide (Lys-Gly) (interchain with G-Cter in ubiquitin); in PHF-tau. Residues lysine 634 and lysine 638 each participate in a glycyl lysine isopeptide (Lys-Gly) (interchain with G-Cter in ubiquitin); alternate cross-link. Position 641 is a phosphoserine (serine 641). Residues lysine 648, lysine 660, and lysine 664 each carry the N6-acetyllysine; alternate modification. Residues lysine 648, lysine 660, and lysine 664 each participate in a glycyl lysine isopeptide (Lys-Gly) (interchain with G-Cter in ubiquitin); alternate cross-link. Lysine 664 is a glycosylation site (N-linked (Glc) (glycation) lysine; in PHF-tau; in vitro). Position 666 is an omega-N-methylarginine (arginine 666). Serine 669 carries the phosphoserine; by PHK modification. The N-linked (Glc) (glycation) lysine; in PHF-tau; in vitro glycan is linked to lysine 670. Lysine 670 is covalently cross-linked (Glycyl lysine isopeptide (Lys-Gly) (interchain with G-Cter in ubiquitin); in PHF-tau). Residue serine 673 is modified to Phosphoserine. Residue lysine 686 is glycosylated (N-linked (Glc) (glycation) lysine; in PHF-tau; in vitro). At lysine 686 the chain carries N6-acetyllysine; alternate. Lysine 686 is covalently cross-linked (Glycyl lysine isopeptide (Lys-Gly) (interchain with G-Cter in ubiquitin); alternate). A Glycyl lysine isopeptide (Lys-Gly) (interchain with G-Cter in ubiquitin) cross-link involves residue lysine 692. An N6-acetyllysine; alternate modification is found at lysine 702. Lysine 702 participates in a covalent cross-link: Glycyl lysine isopeptide (Lys-Gly) (interchain with G-Cter in ubiquitin); alternate. At tyrosine 711 the chain carries Phosphotyrosine. Position 713 is a phosphoserine; by CK1 and PDPK1 (serine 713). Residues 715 to 734 form a disordered region; that stretch reads VVSGDTSPRHLSNVSSTGSI. Serine 717 carries the post-translational modification Phosphoserine; alternate. The O-linked (GlcNAc) serine; alternate glycan is linked to serine 717. Positions 718 to 733 are enriched in polar residues; that stretch reads GDTSPRHLSNVSSTGS. The residue at position 720 (threonine 720) is a Phosphothreonine. Serine 721 carries the phosphoserine; by CK1 and PDPK1 modification. Serine 726 is modified (phosphoserine). Residue serine 733 is modified to Phosphoserine; by CaMK2 and TTBK1. Phosphoserine; by PDPK1 and TTBK1 is present on serine 739. Phosphothreonine; by TTBK1 is present on threonine 744.

In terms of assembly, interacts with MARK1, MARK2, MARK3 and MARK4. Interacts with PSMC2 through SQSTM1. Interacts with SQSTM1 when polyubiquitinated. Interacts with FKBP4. Binds to CSNK1D. Interacts with SGK1. Interacts with EPM2A; the interaction dephosphorylates MAPT at Ser-396. Interacts with PIN1. Interacts with LRRK2. Interacts with LRP1, leading to endocytosis; this interaction is reduced in the presence of LRPAP1/RAP. In terms of processing, phosphorylation at serine and threonine residues in S-P or T-P motifs by proline-directed protein kinases (PDPK1, CDK1, CDK5, GSK3, MAPK) (only 2-3 sites per protein in interphase, seven-fold increase in mitosis, and in the form associated with paired helical filaments (PHF-tau)), and at serine residues in K-X-G-S motifs by MAP/microtubule affinity-regulating kinase (MARK1, MARK2, MARK3 or MARK4), causing detachment from microtubules, and their disassembly. Phosphorylation decreases with age. Phosphorylation within tau/MAP's repeat domain or in flanking regions seems to reduce tau/MAP's interaction with, respectively, microtubules or plasma membrane components. Phosphorylation on Ser-610, Ser-622, Ser-641 and Ser-673 in several isoforms during mitosis. Phosphorylation at Ser-548 by GSK3B reduces ability to bind and stabilize microtubules. Phosphorylation at Ser-579 by BRSK1 and BRSK2 in neurons affects ability to bind microtubules and plays a role in neuron polarization. Phosphorylated at Ser-554, Ser-579, Ser-602, Ser-606 and Ser-669 by PHK. Phosphorylation at Ser-214 by SGK1 mediates microtubule depolymerization and neurite formation in hippocampal neurons. There is a reciprocal down-regulation of phosphorylation and O-GlcNAcylation. Phosphorylation on Ser-717 completely abolishes the O-GlcNAcylation on this site, while phosphorylation on Ser-713 and Ser-721 reduces glycosylation by a factor of 2 and 4 respectively. Phosphorylation on Ser-721 is reduced by about 41.5% by GlcNAcylation on Ser-717. Dephosphorylated at several serine and threonine residues by the serine/threonine phosphatase PPP5C. Post-translationally, polyubiquitinated. Requires functional TRAF6 and may provoke SQSTM1-dependent degradation by the proteasome. PHF-tau can be modified by three different forms of polyubiquitination. 'Lys-48'-linked polyubiquitination is the major form, 'Lys-6'-linked and 'Lys-11'-linked polyubiquitination also occur. O-glycosylated. O-GlcNAcylation content is around 8.2%. There is reciprocal down-regulation of phosphorylation and O-GlcNAcylation. Phosphorylation on Ser-717 completely abolishes the O-GlcNAcylation on this site, while phosphorylation on Ser-713 and Ser-721 reduces O-GlcNAcylation by a factor of 2 and 4 respectively. O-GlcNAcylation on Ser-717 decreases the phosphorylation on Ser-721 by about 41.5%. In terms of processing, glycation of PHF-tau, but not normal brain TAU/MAPT. Glycation is a non-enzymatic post-translational modification that involves a covalent linkage between a sugar and an amino group of a protein molecule forming ketoamine. Subsequent oxidation, fragmentation and/or cross-linking of ketoamine leads to the production of advanced glycation endproducts (AGES). Glycation may play a role in stabilizing PHF aggregation leading to tangle formation in AD. As to expression, expressed in neurons. Isoform PNS-tau is expressed in the peripheral nervous system while the others are expressed in the central nervous system.

The protein resides in the cytoplasm. It localises to the cytosol. The protein localises to the cell membrane. It is found in the cytoskeleton. Its subcellular location is the cell projection. The protein resides in the axon. It localises to the dendrite. The protein localises to the secreted. Promotes microtubule assembly and stability, and might be involved in the establishment and maintenance of neuronal polarity. The C-terminus binds axonal microtubules while the N-terminus binds neural plasma membrane components, suggesting that tau functions as a linker protein between both. Axonal polarity is predetermined by TAU/MAPT localization (in the neuronal cell) in the domain of the cell body defined by the centrosome. The short isoforms allow plasticity of the cytoskeleton whereas the longer isoforms may preferentially play a role in its stabilization. The polypeptide is Microtubule-associated protein tau (Homo sapiens (Human)).